Reading from the N-terminus, the 1064-residue chain is Fibropellin-1 (1064 aa).

An N-terminal signal peptide occupies residues 1 to 19 (MRTWLLAVLLLSVIAVTYG). One can recognise an EGF-like 1 domain in the interval 20–55 (QGECDSDPCENGSTCQEGEGSYICQCPMGYDGQNCD). 4 cysteine pairs are disulfide-bonded: Cys23/Cys34, Cys28/Cys43, Cys45/Cys54, and Cys62/Cys88. An N-linked (GlcNAc...) asparagine glycan is attached at Asn30. One can recognise a CUB domain in the interval 62–175 (CGYNVFDANG…NRGFRITFSS (114 aa)). An N-linked (GlcNAc...) asparagine glycan is attached at Asn136. An EGF-like 2; calcium-binding domain is found at 176–212 (DGDDCDPNLCQNGAACTDLVNDYACTCPPGFTGRNCE). Cystine bridges form between Cys180-Cys191, Cys185-Cys200, Cys202-Cys211, Cys218-Cys229, Cys223-Cys238, Cys240-Cys249, Cys256-Cys267, Cys261-Cys276, Cys278-Cys287, Cys294-Cys305, Cys299-Cys314, Cys316-Cys325, Cys332-Cys343, Cys337-Cys352, Cys354-Cys363, Cys370-Cys381, Cys375-Cys390, Cys392-Cys401, Cys408-Cys419, Cys413-Cys428, Cys430-Cys439, Cys446-Cys457, Cys451-Cys466, Cys468-Cys477, Cys484-Cys495, Cys489-Cys504, Cys506-Cys515, Cys522-Cys533, Cys527-Cys542, Cys544-Cys553, Cys560-Cys571, Cys565-Cys580, Cys582-Cys591, Cys598-Cys609, Cys603-Cys618, Cys620-Cys629, Cys636-Cys647, Cys641-Cys656, Cys658-Cys667, Cys674-Cys685, Cys679-Cys694, Cys696-Cys705, Cys712-Cys723, Cys717-Cys732, Cys734-Cys743, Cys750-Cys761, Cys755-Cys770, Cys772-Cys781, Cys788-Cys799, Cys793-Cys808, Cys810-Cys819, Cys826-Cys837, Cys831-Cys846, Cys848-Cys857, Cys864-Cys875, Cys869-Cys884, Cys886-Cys895, Cys902-Cys913, Cys907-Cys922, Cys924-Cys933, and Cys939-Cys1015. Residues 214-250 (DIDECASDPCQNGGACVDGVNGYVCNCVPGFDGDECE) enclose the EGF-like 3; calcium-binding domain. The EGF-like 4; calcium-binding domain occupies 252 to 288 (NINECASSPCLNGGICVDGVNMFECTCLAGFTGVRCE). The EGF-like 5; calcium-binding domain maps to 290-326 (NIDECASAPCQNGGICIDGINGYTCSCPLGFSGDNCE). Residues 328–364 (NDDECSSIPCLNGGTCVDLVNAYMCVCAPGWTGPTCA) form the EGF-like 6; calcium-binding domain. In terms of domain architecture, EGF-like 7; calcium-binding spans 366–402 (NIDECASAPCQNGGVCIDGVNGYMCDCQPGYTGTHCE). An EGF-like 8; calcium-binding domain is found at 404-440 (DIDECARPPCQNGGDCVDGVNGYVCICAPGFDGLNCE). Positions 442–478 (NIDECASRPCQNGAVCVDGVNGFVCTCSAGYTGVLCE) constitute an EGF-like 9; calcium-binding domain. The 37-residue stretch at 480-516 (DINECASMPCLNGGVCTDLVNGYICTCAAGFEGTNCE) folds into the EGF-like 10; calcium-binding domain. Positions 518 to 554 (DTDECASFPCQNGATCTDQVNGYVCTCVPGYTGVLCE) constitute an EGF-like 11; calcium-binding domain. The EGF-like 12; calcium-binding domain maps to 556–592 (DINECASFPCLNGGTCNDQVNGYVCVCAQDTSVSTCE). The region spanning 594-630 (DRDECASAPCLNGGACMDVVNGFVCTCLPGWEGTNCE) is the EGF-like 13; calcium-binding domain. The EGF-like 14; calcium-binding domain occupies 632–668 (NTDECASSPCMNGGLCVDQVNSYVCFCLPGFTGIHCG). The 37-residue stretch at 670–706 (EIDECASSPCLNGGQCIDRVDSYECVCAAGYTAVRCQ) folds into the EGF-like 15; calcium-binding domain. One can recognise an EGF-like 16; calcium-binding domain in the interval 708–744 (NIDECASAPCQNGGVCVDGVNGYVCNCAPGYTGDNCE). The EGF-like 17; calcium-binding domain occupies 746–782 (EIDECASMPCLNGGACIEMVNGYTCQCVAGYTGVICE). The region spanning 784-820 (DIDECASAPCQNGGVCTDTINGYICACVPGFTGSNCE) is the EGF-like 18; calcium-binding domain. Positions 822–858 (NIDECASDPCLNGGICVDGVNGFVCQCPPNYSGTYCE) constitute an EGF-like 19; calcium-binding domain. A glycan (N-linked (GlcNAc...) asparagine) is linked at Asn851. The 37-residue stretch at 860-896 (SLDACRSMPCQNGATCVNVGADYVCECVPGYAGQNCE) folds into the EGF-like 20 domain. Residues 898 to 934 (DINECASLPCQNGGLCIDGIAGYTCQCRLGYIGVNCE) enclose the EGF-like 21; calcium-binding domain. Residues 937–1056 (GFCDLEGMWY…GQDKWTRYEQ (120 aa)) form the Avidin-like domain.

In terms of assembly, homotetramer.

It localises to the secreted. Its subcellular location is the extracellular space. The protein localises to the cytoplasmic vesicle. The protein resides in the extracellular matrix. It is found in the hyaline layer. It localises to the apical lamina. In terms of biological role, forms the apical lamina, a component of the extracellular matrix. In Strongylocentrotus purpuratus (Purple sea urchin), this protein is Fibropellin-1 (EGF1).